The chain runs to 85 residues: U4-theraphotoxin-Hhn1h (85 aa).

A signal peptide spans 1 to 22 (MKVTLIAILTCAAVLVLHTTAA). Residues 23 to 48 (EELEAESQLMEVGMPDTELAAVDEER) constitute a propeptide that is removed on maturation. 3 cysteine pairs are disulfide-bonded: Cys52-Cys66, Cys56-Cys77, and Cys71-Cys82.

It belongs to the neurotoxin 12 (Hwtx-2) family. 02 (Hwtx-2) subfamily. Expressed by the venom gland.

The protein resides in the secreted. Postsynaptic neurotoxin. The chain is U4-theraphotoxin-Hhn1h from Cyriopagopus hainanus (Chinese bird spider).